A 611-amino-acid polypeptide reads, in one-letter code: Sodium-coupled monocarboxylate transporter 1 (611 aa).

Topologically, residues 1 to 9 (MDASRDIGS) are extracellular. Residues 10–30 (FVVWDYVVFAGMLLISAAIGI) form a helical membrane-spanning segment. The Cytoplasmic segment spans residues 31 to 51 (YYAFAGGGQQTSKDFLMGGRS). A helical transmembrane segment spans residues 52–72 (MSAVPVALSLTASFMSAVTVL). The Extracellular portion of the chain corresponds to 73–86 (GTPAEVYRFGAIFS). Residues 87-107 (IFVITYFFVVVISAEVFLPVF) traverse the membrane as a helical segment. Topologically, residues 108–132 (YRLGITSTYEYLELRFNRCIRLCGT) are cytoplasmic. Residues 133 to 153 (ILFIVQTILYTGIVIYAPALA) form a helical membrane-spanning segment. Residues 154-161 (LNQVTGFD) lie on the Extracellular side of the membrane. Residues 162-182 (LWGAVVATGVVCTFYCTLGGL) form a helical membrane-spanning segment. The Cytoplasmic segment spans residues 183 to 184 (KA). The chain crosses the membrane as a helical span at residues 185-205 (VVWTDVFQVGIMVAGFASVII). Residues 206–239 (QASITQHGINKILSDAFNGGRLNFWNFDPNPLQR) are Extracellular-facing. Residues 240–260 (HTFWTIVIGGTFTWTTIYGVN) traverse the membrane as a helical segment. Topologically, residues 261–279 (QSQVQRYISCKSRLHAKLS) are cytoplasmic. A helical membrane pass occupies residues 280–300 (LYVNLVGLWVILTCSIFCGLA). Over 301-336 (LYSRYRECDPWTSKKVSAIDQLMPYLVLDILKNYPG) the chain is Extracellular. A helical membrane pass occupies residues 337–359 (VPGLFVACAYSGTLSTVSSSINA). Topologically, residues 360-389 (LAAVTVEDLIKPRFKSLSEKSLSWISQGMS) are cytoplasmic. A helical membrane pass occupies residues 390-410 (VLYGALCIGMAALASLMGALL). The Extracellular segment spans residues 411 to 415 (QAALS). A helical membrane pass occupies residues 416–436 (IFGMVGGPLLGLFSLGILVPF). Residues 437-439 (ANS) lie on the Cytoplasmic side of the membrane. Residues 440–460 (IGALTGLLAGFAISLWVGIGA) traverse the membrane as a helical segment. Topologically, residues 461–518 (QLYPPLPERTLPLPLETYGCNITHNGSDWMSTTEMPFSTSAFQIHNAERTPLMDNWYS) are extracellular. N485 carries an N-linked (GlcNAc...) asparagine glycan. A helical transmembrane segment spans residues 519 to 539 (LSYLYFSTIGTLTTLFVGILI). The Cytoplasmic portion of the chain corresponds to 540–611 (SLSTGGRKQN…HSGKINGTRL (72 aa)). The PDZ-binding signature appears at 609-611 (TRL).

It belongs to the sodium:solute symporter (SSF) (TC 2.A.21) family. In terms of assembly, interacts (via PDZ-binding motif) with PDZK1 (via PDZ domains 1 and 3); interaction increases nicotinate transport activity of SLC5A8. In terms of tissue distribution, expressed in brain, colon, kidney and in the ileum and jejunum of small intestine. In the kidney, expression occurred in the proximal tubule and the loop of Henle, being restricted to tubular epithelial cells in both the cortex and the medulla. In the colon, predominantly expressed in the distal half of the large bowel and in the most terminal ileum. Localized selectively in the luminal surface of crypts in the large intestine and to the brush border in the middle parts of crypts in the cecum. In the brain, expression was seen throughout, exclusively in neurons, including the cortex, hippocampus, cerebellum and pituitary gland (at protein level). Expression is reduced in oligodendrogliomas.

Its subcellular location is the apical cell membrane. It catalyses the reaction (S)-lactate(out) + 2 Na(+)(out) = (S)-lactate(in) + 2 Na(+)(in). It carries out the reaction propanoate(out) + 2 Na(+)(out) = propanoate(in) + 2 Na(+)(in). The enzyme catalyses pyruvate(out) + 2 Na(+)(out) = pyruvate(in) + 2 Na(+)(in). The catalysed reaction is acetate(out) + 2 Na(+)(out) = acetate(in) + 2 Na(+)(in). It catalyses the reaction butanoate(out) + 2 Na(+)(out) = butanoate(in) + 2 Na(+)(in). It carries out the reaction nicotinate(out) + 2 Na(+)(out) = nicotinate(in) + 2 Na(+)(in). The enzyme catalyses (R)-3-hydroxybutanoate(out) + 2 Na(+)(out) = (R)-3-hydroxybutanoate(in) + 2 Na(+)(in). The catalysed reaction is acetoacetate(out) + 2 Na(+)(out) = acetoacetate(in) + 2 Na(+)(in). It catalyses the reaction 4-methyl-2-oxopentanoate(out) + 2 Na(+)(out) = 4-methyl-2-oxopentanoate(in) + 2 Na(+)(in). It carries out the reaction 5-oxo-L-proline(out) + 2 Na(+)(out) = 5-oxo-L-proline(in) + 2 Na(+)(in). The enzyme catalyses iodide(out) = iodide(in). The catalysed reaction is chloride(in) = chloride(out). It catalyses the reaction nitrate(in) = nitrate(out). It carries out the reaction bromide(in) = bromide(out). With respect to regulation, transport of D-lactate and pyruvate stimulated by alpha-cyano-4-hydroxycinnamic acid, but inhibited by the short-chain fatty acids acetate, propionate and butyrate. Functionally, acts as an electrogenic sodium (Na(+)) and chloride (Cl-)-dependent sodium-coupled solute transporter, including transport of monocarboxylates (short-chain fatty acids including L-lactate, D-lactate, pyruvate, acetate, propionate, valerate and butyrate), mocarboxylate drugs (nicotinate, benzoate, salicylate and 5-aminosalicylate) and ketone bodies (beta-D-hydroxybutyrate, acetoacetate and alpha-ketoisocaproate), with a Na(+):substrate stoichiometry of between 4:1 and 2:1. Catalyzes passive carrier mediated diffusion of iodide. Mediates iodide transport from the thyrocyte into the colloid lumen through the apical membrane. May be responsible for the absorption of D-lactate and monocarboxylate drugs from the intestinal tract. May play a critical role in the entry of L-lactate and ketone bodies into neurons by a process driven by an electrochemical Na(+) gradient and hence contribute to the maintenance of the energy status and function of neurons. Mediates sodium-coupled electrogenic transport of pyroglutamate (5-oxo-L-proline). Can mediate the transport of chloride, bromide, iodide and nitrate ions when external concentration of sodium ions is reduced. The sequence is that of Sodium-coupled monocarboxylate transporter 1 from Mus musculus (Mouse).